An 880-amino-acid chain; its full sequence is Leucine--tRNA ligase (880 aa).

Residues 46-56 (PYPSGALHMGH) carry the 'HIGH' region motif. Residues 638 to 642 (KMSKS) carry the 'KMSKS' region motif. Position 641 (K641) interacts with ATP.

It belongs to the class-I aminoacyl-tRNA synthetase family.

The protein localises to the cytoplasm. It carries out the reaction tRNA(Leu) + L-leucine + ATP = L-leucyl-tRNA(Leu) + AMP + diphosphate. The sequence is that of Leucine--tRNA ligase from Xanthomonas euvesicatoria pv. vesicatoria (strain 85-10) (Xanthomonas campestris pv. vesicatoria).